A 177-amino-acid chain; its full sequence is Retrograde regulation protein 1 (177 aa).

The segment at 1-24 (MSSIPAGTDPGSCGANFKNDRKRR) is disordered. The bHLH domain occupies 11–96 (GSCGANFKND…TQAVEYISHL (86 aa)). A phosphoserine mark is found at serine 50 and serine 52. Disordered regions lie at residues 52-82 (SNDTLSESTPGALGLSSKAKGTGTKDGKPNK) and 147-177 (LAATNDDSVRPPAKRLSSFEYGGYGEYGNGS). Threonine 60 is subject to Phosphothreonine. Gly residues predominate over residues 168–177 (GGYGEYGNGS).

In terms of assembly, binds DNA as a heterodimer with RTG3.

It is found in the nucleus. Functionally, required for a novel path of interorganelle communication between mitochondria, peroxisomes and the nucleus, thereby maintaining a functional metabolic interaction between the tricarboxylic acid and glyoxylate cycles. Transcription factor that regulates CIT2 gene expression. Binds to two identical sites oriented as inverted repeats 28 bp apart in a regulatory upstream activation sequence element (UASR) in the CIT2 promoter. The core binding site is 5'-GGTCAC-3'. This Saccharomyces cerevisiae (strain ATCC 204508 / S288c) (Baker's yeast) protein is Retrograde regulation protein 1 (RTG1).